A 276-amino-acid polypeptide reads, in one-letter code: Energy-coupling factor transporter ATP-binding protein EcfA1 (276 aa).

Positions 2-237 constitute an ABC transporter domain; the sequence is IEIKNLKFKY…GSELVDLGLD (236 aa). 37 to 44 is a binding site for ATP; the sequence is GHNGSGKS.

This sequence belongs to the ABC transporter superfamily. Energy-coupling factor EcfA family. Forms a stable energy-coupling factor (ECF) transporter complex composed of 2 membrane-embedded substrate-binding proteins (S component), 2 ATP-binding proteins (A component) and 2 transmembrane proteins (T component).

The protein resides in the cell membrane. In terms of biological role, ATP-binding (A) component of a common energy-coupling factor (ECF) ABC-transporter complex. Unlike classic ABC transporters this ECF transporter provides the energy necessary to transport a number of different substrates. The polypeptide is Energy-coupling factor transporter ATP-binding protein EcfA1 (Streptococcus thermophilus (strain ATCC BAA-491 / LMD-9)).